The following is a 1501-amino-acid chain: 1-phosphatidylinositol 4,5-bisphosphate phosphodiesterase eta-2 (1501 aa).

Residues Arg28–Pro47 form a disordered region. A necessary for plasma membrane localization region spans residues Met75–Ala229. The 109-residue stretch at Ser121–Ala229 folds into the PH domain. 2 consecutive EF-hand domains span residues Thr243–Asn278 and Leu279–Arg315. 5 residues coordinate Ca(2+): Asp256, Asn258, Asp260, Ser262, and Glu267. The PI-PLC X-box domain occupies Gln400–Lys545. His415 is a catalytic residue. Ca(2+)-binding residues include Asn416, Glu445, and Asp447. Residue His459 is part of the active site. Glu494 lines the Ca(2+) pocket. Lys543 and Lys545 together coordinate substrate. 2 disordered regions span residues Ile551–Glu570 and Asp609–Thr700. Acidic residues predominate over residues Glu553–Glu570. A phosphoserine mark is found at Ser561 and Ser565. Residues Arg626–Glu638 are compositionally biased toward basic and acidic residues. Basic residues predominate over residues Ser662–Lys673. 2 positions are modified to phosphoserine: Ser676 and Ser686. The 115-residue stretch at Leu707 to Cys821 folds into the PI-PLC Y-box domain. Residues Ser734 and Arg761 each contribute to the substrate site. Residues Cys821–Gly950 form the C2 domain. The Ca(2+) site is built by Ile865, Asp867, Asp891, Asp920, His921, and Asp922. Disordered stretches follow at residues Gly986–Pro1073, Glu1089–Asp1238, Ser1273–Gln1305, and Gly1398–Ser1469. Over residues Glu1089–Pro1107 the composition is skewed to low complexity. 2 stretches are compositionally biased toward basic and acidic residues: residues Gly1142 to Leu1151 and Leu1215 to Ser1227. Over residues Arg1421 to Arg1439 the composition is skewed to low complexity. Residues Gln1440–Thr1463 show a composition bias toward basic and acidic residues.

Ca(2+) is required as a cofactor. Specifically detected in the brain, with higher level in cerebral cortex, olfactory bulb and hippocampus (at protein level). Expressed in the pyramidal cells of the hippocampus, but also in eye and lung.

It is found in the cytoplasm. Its subcellular location is the cell membrane. It carries out the reaction a 1,2-diacyl-sn-glycero-3-phospho-(1D-myo-inositol-4,5-bisphosphate) + H2O = 1D-myo-inositol 1,4,5-trisphosphate + a 1,2-diacyl-sn-glycerol + H(+). With respect to regulation, activity is stimulated by GNB1:GNG2. In terms of biological role, the production of the second messenger molecules diacylglycerol (DAG) and inositol 1,4,5-trisphosphate (IP3) is mediated by activated phosphatidylinositol-specific phospholipase C enzymes. This phospholipase activity is very sensitive to calcium. May be important for formation and maintenance of the neuronal network in the postnatal brain. The chain is 1-phosphatidylinositol 4,5-bisphosphate phosphodiesterase eta-2 from Mus musculus (Mouse).